Reading from the N-terminus, the 923-residue chain is Protein dct-6 (923 aa).

A coiled-coil region spans residues 312–347; the sequence is DMNDQIEQMISLLVDELSELEKLEQLCKEVERTGNQ.

Its function is as follows. May have a role in tumor suppression. In Caenorhabditis elegans, this protein is Protein dct-6 (dct-6).